Here is a 595-residue protein sequence, read N- to C-terminus: Alpha-1,3-galactosidase B (595 aa).

The signal sequence occupies residues 1–22; it reads MKTILLFALSLLLSLSVSDVCA. PbH1 repeat units lie at residues 432-454, 455-477, and 488-541; these read TPEV…LFST, PKKT…LLCG, and CRDV…VIED.

Belongs to the glycosyl hydrolase 110 family. B subfamily.

It carries out the reaction Hydrolysis of terminal, non-reducing branched (1-&gt;3)-alpha-D-galactosidic residues, producing free D-galactose.. The catalysed reaction is Hydrolysis of terminal, non-reducing linear (1-&gt;3)-alpha-D-galactosidic residues, producing free D-galactose.. It catalyses the reaction Hydrolysis of terminal, non-reducing alpha-D-galactose residues in alpha-D-galactosides, including galactose oligosaccharides, galactomannans and galactolipids.. Its function is as follows. Alpha-galactosidase. Removes both branched alpha-1,3-linked galactose residues of blood group B antigens and linear alpha-1,3-linked galactose structures. This is Alpha-1,3-galactosidase B (glaB) from Bacteroides fragilis (strain YCH46).